The following is a 296-amino-acid chain: Diheme cytochrome c-type (296 aa).

The heme c site is built by Cys52, Cys55, His56, Cys202, Cys205, and His206.

In terms of processing, binds 2 heme c groups covalently per subunit.

It is found in the cell membrane. Its function is as follows. Particularly expressed when cells generate energy via aerobic respiration. The sequence is that of Diheme cytochrome c-type (cycG) from Cereibacter sphaeroides (strain ATCC 17023 / DSM 158 / JCM 6121 / CCUG 31486 / LMG 2827 / NBRC 12203 / NCIMB 8253 / ATH 2.4.1.) (Rhodobacter sphaeroides).